The following is a 432-amino-acid chain: Glutamyl-tRNA reductase (432 aa).

Residues 49-52, Ser109, 114-116, and Gln120 each bind substrate; these read TCNR and EGQ. The active-site Nucleophile is Cys50. 198 to 203 contributes to the NADP(+) binding site; it reads GAGRMS.

It belongs to the glutamyl-tRNA reductase family. As to quaternary structure, homodimer.

The enzyme catalyses (S)-4-amino-5-oxopentanoate + tRNA(Glu) + NADP(+) = L-glutamyl-tRNA(Glu) + NADPH + H(+). It participates in porphyrin-containing compound metabolism; protoporphyrin-IX biosynthesis; 5-aminolevulinate from L-glutamyl-tRNA(Glu): step 1/2. Its pathway is porphyrin-containing compound metabolism; chlorophyll biosynthesis. Catalyzes the NADPH-dependent reduction of glutamyl-tRNA(Glu) to glutamate 1-semialdehyde (GSA). The sequence is that of Glutamyl-tRNA reductase from Parasynechococcus marenigrum (strain WH8102).